A 72-amino-acid chain; its full sequence is MEQPTSSINGEKRKSPCESNNENDEMQETPNRDLAPEPSLKKMKTSEYSTVLAFCYRKAKKIHSNQLENDQS.

The segment at 1–44 (MEQPTSSINGEKRKSPCESNNENDEMQETPNRDLAPEPSLKKMK) is disordered.

It belongs to the SPAN-X family.

The chain is Sperm protein associated with the nucleus on the X chromosome N1 (SPANXN1) from Homo sapiens (Human).